The sequence spans 334 residues: MVGREKELSIHFVPGCCQLVEEEVNIPSRRVLITGATGLLGRAVYKEFQQSNWHTVGCGFRRARPKFEQVNLLDSEAVHHLIHDFQPHVIVHCAAERRPDVVESQPDAASQLNVGASGNLAKEAAAIGAFLIYISSDYVFDGTNPPYTEEDIPSPLNLYGKTKLDGEKAVLENNLGAAVLRIPVLYGEVEKLEESAVTVMFDKVQFSNKSANMDHWQQRFPTHVKDVASVCRQLAEKRMLDPSIKGTFHWSGNEQMTKYEMACAIADAFNLPSSHLRPITDSPVIGAQRPKNAQLDCSKLETLGIGQRTPFRTGIKESLWPFLIDKRWRQTVFH.

NADP(+) is bound by residues 37–40, 60–62, 71–72, cysteine 93, arginine 97, tyrosine 159, and leucine 185; these read TGLL, FRR, and NL. Threonine 309 carries the post-translational modification Phosphothreonine. Residues 319–334 are required for interaction with MAT2A; it reads LWPFLIDKRWRQTVFH.

This sequence belongs to the dTDP-4-dehydrorhamnose reductase family. MAT2B subfamily. Heterotrimer; composed of a catalytic MAT2A homodimer that binds one regulatory MAT2B chain. Heterohexamer; composed of a central, catalytic MAT2A homotetramer flanked on either side by a regulatory MAT2B chain. NADP binding increases the affinity for MAT2A.

It participates in amino-acid biosynthesis; S-adenosyl-L-methionine biosynthesis; S-adenosyl-L-methionine from L-methionine: step 1/1. Regulatory subunit of S-adenosylmethionine synthetase 2, an enzyme that catalyzes the formation of S-adenosylmethionine from methionine and ATP. Regulates MAT2A catalytic activity by changing its kinetic properties, increasing its affinity for L-methionine. Can bind NADP (in vitro). The chain is Methionine adenosyltransferase 2 subunit beta (Mat2b) from Mus musculus (Mouse).